Consider the following 296-residue polypeptide: Diaminopimelate epimerase (296 aa).

Positions 17, 49, and 69 each coordinate substrate. Cysteine 78 functions as the Proton donor in the catalytic mechanism. Residues 79–80 (GN), asparagine 171, asparagine 205, and 223–224 (ER) contribute to the substrate site. Cysteine 232 (proton acceptor) is an active-site residue. Substrate is bound at residue 233–234 (GT).

This sequence belongs to the diaminopimelate epimerase family. Homodimer.

It is found in the cytoplasm. The enzyme catalyses (2S,6S)-2,6-diaminopimelate = meso-2,6-diaminopimelate. It participates in amino-acid biosynthesis; L-lysine biosynthesis via DAP pathway; DL-2,6-diaminopimelate from LL-2,6-diaminopimelate: step 1/1. Its function is as follows. Catalyzes the stereoinversion of LL-2,6-diaminopimelate (L,L-DAP) to meso-diaminopimelate (meso-DAP), a precursor of L-lysine and an essential component of the bacterial peptidoglycan. This chain is Diaminopimelate epimerase, found in Methylorubrum extorquens (strain PA1) (Methylobacterium extorquens).